Consider the following 216-residue polypeptide: Protein-L-isoaspartate O-methyltransferase (216 aa).

S60 is an active-site residue.

It belongs to the methyltransferase superfamily. L-isoaspartyl/D-aspartyl protein methyltransferase family.

Its subcellular location is the cytoplasm. It catalyses the reaction [protein]-L-isoaspartate + S-adenosyl-L-methionine = [protein]-L-isoaspartate alpha-methyl ester + S-adenosyl-L-homocysteine. Its function is as follows. Catalyzes the methyl esterification of L-isoaspartyl residues in peptides and proteins that result from spontaneous decomposition of normal L-aspartyl and L-asparaginyl residues. It plays a role in the repair and/or degradation of damaged proteins. The protein is Protein-L-isoaspartate O-methyltransferase of Methanococcus aeolicus (strain ATCC BAA-1280 / DSM 17508 / OCM 812 / Nankai-3).